The following is a 495-amino-acid chain: Loline biosynthesis cluster 1 transcription factor lolU1 (495 aa).

The protein resides in the nucleus. Transcriptional regulator that may regulate the expression of the loline biosynthesis cluster 1, one of the 2 clusters involved in the biosynthesis of loline alkaloids, potent insecticidal agents composed of a pyrrolizidine ring system and an uncommon ether bridge linking carbons 2 and 7. The chain is Loline biosynthesis cluster 1 transcription factor lolU1 from Epichloe uncinata (Endophyte fungus).